The chain runs to 621 residues: tRNA uridine 5-carboxymethylaminomethyl modification enzyme MnmG (621 aa).

8-13 is a binding site for FAD; the sequence is GAGHAG. Residue 269 to 283 coordinates NAD(+); the sequence is GPRYCPSVEDKIFRF.

The protein belongs to the MnmG family. In terms of assembly, homodimer. Heterotetramer of two MnmE and two MnmG subunits. It depends on FAD as a cofactor.

The protein resides in the cytoplasm. NAD-binding protein involved in the addition of a carboxymethylaminomethyl (cmnm) group at the wobble position (U34) of certain tRNAs, forming tRNA-cmnm(5)s(2)U34. The sequence is that of tRNA uridine 5-carboxymethylaminomethyl modification enzyme MnmG from Chlorobium chlorochromatii (strain CaD3).